Consider the following 37-residue polypeptide: Large ribosomal subunit protein bL36c (37 aa).

This sequence belongs to the bacterial ribosomal protein bL36 family.

Its subcellular location is the plastid. The protein resides in the chloroplast. This Stigeoclonium helveticum (Green alga) protein is Large ribosomal subunit protein bL36c.